The sequence spans 74 residues: Large ribosomal subunit protein bL31 (74 aa).

Cys17, Cys19, Cys38, and Cys41 together coordinate Zn(2+).

This sequence belongs to the bacterial ribosomal protein bL31 family. Type A subfamily. As to quaternary structure, part of the 50S ribosomal subunit. Requires Zn(2+) as cofactor.

Its function is as follows. Binds the 23S rRNA. This Gloeobacter violaceus (strain ATCC 29082 / PCC 7421) protein is Large ribosomal subunit protein bL31.